A 73-amino-acid chain; its full sequence is UPF0352 protein HD_1515 (73 aa).

It belongs to the UPF0352 family.

The sequence is that of UPF0352 protein HD_1515 from Haemophilus ducreyi (strain 35000HP / ATCC 700724).